Reading from the N-terminus, the 242-residue chain is uncharacterized protein (242 aa).

Residues Gly198, Ile218, and Leu227 each coordinate S-adenosyl-L-methionine.

Belongs to the class IV-like SAM-binding methyltransferase superfamily. RNA methyltransferase TrmH family.

This is an uncharacterized protein from Mycoplasma genitalium (strain ATCC 33530 / DSM 19775 / NCTC 10195 / G37) (Mycoplasmoides genitalium).